The following is a 120-amino-acid chain: uncharacterized protein (120 aa).

Positions 1-18 (MRSWIPLLVLFAVLAVFA) are cleaved as a signal peptide. Positions 20–99 (AGKSSESDES…GDNRVKRDGL (80 aa)) are disordered.

This is an uncharacterized protein from Caenorhabditis elegans.